Reading from the N-terminus, the 307-residue chain is Glutaminase (307 aa).

Positions 66, 116, 160, 167, 191, 243, and 261 each coordinate substrate.

The protein belongs to the glutaminase family. Homotetramer.

It carries out the reaction L-glutamine + H2O = L-glutamate + NH4(+). The protein is Glutaminase of Pseudoalteromonas translucida (strain TAC 125).